A 434-amino-acid polypeptide reads, in one-letter code: 3-phosphoshikimate 1-carboxyvinyltransferase (434 aa).

Residues Lys-15, Ser-16, and Arg-20 each contribute to the 3-phosphoshikimate site. Residue Lys-15 participates in phosphoenolpyruvate binding. Phosphoenolpyruvate-binding residues include Gly-96 and Arg-124. Positions 169, 171, 195, 319, and 346 each coordinate 3-phosphoshikimate. A phosphoenolpyruvate-binding site is contributed by Gln-171. Catalysis depends on Asp-319, which acts as the Proton acceptor. Residues Arg-350 and Arg-394 each coordinate phosphoenolpyruvate.

The protein belongs to the EPSP synthase family. In terms of assembly, monomer.

It localises to the cytoplasm. The enzyme catalyses 3-phosphoshikimate + phosphoenolpyruvate = 5-O-(1-carboxyvinyl)-3-phosphoshikimate + phosphate. The protein operates within metabolic intermediate biosynthesis; chorismate biosynthesis; chorismate from D-erythrose 4-phosphate and phosphoenolpyruvate: step 6/7. Catalyzes the transfer of the enolpyruvyl moiety of phosphoenolpyruvate (PEP) to the 5-hydroxyl of shikimate-3-phosphate (S3P) to produce enolpyruvyl shikimate-3-phosphate and inorganic phosphate. This chain is 3-phosphoshikimate 1-carboxyvinyltransferase, found in Chlorobaculum tepidum (strain ATCC 49652 / DSM 12025 / NBRC 103806 / TLS) (Chlorobium tepidum).